A 287-amino-acid polypeptide reads, in one-letter code: uncharacterized protein (287 aa).

Disordered stretches follow at residues 109-175, 203-223, and 257-287; these read QEES…SSQD, IPPP…SQPV, and KESE…SSEE. The span at 110 to 136 shows a compositional bias: low complexity; sequence EESSSSLEEGIIEDPVVATPSPASAAP. Over residues 143 to 152 the composition is skewed to basic and acidic residues; it reads RKEFKNEKWK. Residues 153–162 show a composition bias toward basic residues; sequence EKKKQGRRRN. Over residues 273–287 the composition is skewed to basic and acidic residues; the sequence is SLEEASVHDRISSEE.

Belongs to the chlamydial CPn_0623/CT_504/TC_0791 family.

This is an uncharacterized protein from Chlamydia muridarum (strain MoPn / Nigg).